A 396-amino-acid chain; its full sequence is Metallophosphoesterase 1 (396 aa).

Residues 27–47 traverse the membrane as a helical segment; sequence IAVVFAVLLFCEFLIYYLAIF. Residues Asp77, Asp119, Asn157, His249, His303, and His305 each coordinate a divalent metal cation. Residues 356-376 form a helical membrane-spanning segment; sequence VVLVIYCGAVGFLVVLTLSHL. Residues 392 to 396 carry the Di-lysine motif motif; the sequence is KRKTR.

Belongs to the metallophosphoesterase superfamily. MPPE1 family. As to quaternary structure, interacts with GPI-anchor proteins (via the GPI portion). Interacts with TMED10. Mn(2+) serves as cofactor.

It is found in the endoplasmic reticulum-Golgi intermediate compartment membrane. Functionally, metallophosphoesterase that catalyzes the removal of a side-chain ethanolamine-phosphate (EtNP) from the second mannose of the GPI-anchor protein intermediate. Participates in the glycan remodeling steps of GPI-anchor maturation to allow an efficient transport of GPI-anchor proteins from the endoplasmic reticulum to the Golgi. The sequence is that of Metallophosphoesterase 1 from Macaca fascicularis (Crab-eating macaque).